Here is a 617-residue protein sequence, read N- to C-terminus: Probable Xaa-Pro aminopeptidase P (617 aa).

Residues aspartate 414, aspartate 425, glutamate 523, and glutamate 537 each coordinate Mn(2+).

The protein belongs to the peptidase M24B family. Requires Mn(2+) as cofactor.

The catalysed reaction is Release of any N-terminal amino acid, including proline, that is linked to proline, even from a dipeptide or tripeptide.. In terms of biological role, catalyzes the removal of a penultimate prolyl residue from the N-termini of peptides. In Ajellomyces dermatitidis (strain ER-3 / ATCC MYA-2586) (Blastomyces dermatitidis), this protein is Probable Xaa-Pro aminopeptidase P (AMPP).